The following is a 459-amino-acid chain: MNFPRALAGFSSWLFKPELAEDSPDNDSPDNDTVNPWRELLQKINVADLPDSSFSSGKELNDSVYHTFEHFCKIRDYDAVGELLLAFLDKVTKERDQFRDEISQLRMHINDLKASKCVLGETLLSYRHRIEVGEKQTEALIVRLADVQSQVMCQPARKVSADKVRALIGKEWDPVTWDGDVWEDIDSEGSEEAELPTVLASPSLSEESGYALSKERTQQDKADAPQIQSSTSLVTSEPVTRPKSLSDLTSQKHRHTNHELNSLAHSNRQKAKEHARKWILRVWDNGGRLTILDQIEFLSLGPLSLDSEFNVIARTVEDNGVKSLFDWLAEAWVQRWPTTRELQSPDTLEWYSIEDGIERLRELGMIEWLCVKATCPQWRGPEDVPITRAMRITFVRETRETWKSFVFSLLCIKDITVGSVAAQLHDLIELSLKPTAAGLTSVGSVGVLSLSPWKHQSNS.

Residues 192–269 form a disordered region; that stretch reads EAELPTVLAS…LNSLAHSNRQ (78 aa). The span at 213 to 223 shows a compositional bias: basic and acidic residues; the sequence is SKERTQQDKAD. Over residues 226–238 the composition is skewed to polar residues; sequence QIQSSTSLVTSEP.

Retroviral restriction factor that prevents infection by gammaretroviruses. Acts by interacting with the capsid protein ca after entry of the virus into the cell. This interaction presumably disrupt the capsid thereby inactivating the viral genome, making it unable to enter host nucleus and integrate into host genome. The chain is Friend virus susceptibility protein 1 (Fv1) from Mus musculus (Mouse).